We begin with the raw amino-acid sequence, 205 residues long: V-type ATP synthase subunit E (205 aa).

Belongs to the V-ATPase E subunit family.

Functionally, produces ATP from ADP in the presence of a proton gradient across the membrane. The sequence is that of V-type ATP synthase subunit E from Treponema denticola (strain ATCC 35405 / DSM 14222 / CIP 103919 / JCM 8153 / KCTC 15104).